Reading from the N-terminus, the 234-residue chain is UstYa family oxidase phomYd' (234 aa).

The tract at residues 1–26 (MEKFFSPSRHNYADLSPTDVPASEES) is disordered. The helical transmembrane segment at 47-69 (VLVNRLLAASTVALVMVSLWLGW) threads the bilayer. Residues 151-155 (HWDHC) carry the HXXHC 1 motif. The N-linked (GlcNAc...) asparagine glycan is linked to Asn208.

This sequence belongs to the ustYa family.

The protein localises to the membrane. The protein operates within mycotoxin biosynthesis. Its function is as follows. UstYa family oxidase; part of the gene cluster that mediates the biosynthesis of the phomopsins, a group of hexapeptide mycotoxins which infects lupins and causes lupinosis disease in livestock. Within the pathway, phomYd' catalyzes the desaturation of the Asp moiety into 2,3-dehydroaspartic acid (dAsp). The pathway starts with the processing of the precursor phomA' by several endopeptidases including kexin proteases as well as the cluster-specific S41 family peptidase phomP1 and the oligopeptidase phomG' to produce 10 identical copies of the hexapeptide Tyr-Val-Ile-Pro-Ile-Asp. After being excised from the precursor peptide, the core peptides are cyclized and modified post-translationally by enzymes encoded within the gene cluster. The timing and order of proteolysis of the phomA' precursor and PTMs are still unknown. Two tyrosinase-like enzymes, phomQ1' and phomQ2, catalyze the chlorination and hydroxylation of Tyr, respectively. PhomYb, is proposed to be involved in the construction of the macrocyclic structure. The other 4 ustYa family proteins may be involved in PTMs that generate the unique structure of phomopsin A. PhomYa' is required for the hydroxylation of C-beta of Tyr. PhomYc', phomYd', and phomYe are responsible for the biosynthesis of 2,3-dehydroisoleucine (dIle), 2,3-dehydroaspartic acid (dAsp), and 3,4-dehydroproline (dPro), respectively. While dIle formation by phomYc' is indispensable for the installation of dAsp by phomYd', the order of the other PTMs have not been elucidated yet. Most of the biosynthetic enzymes likely have broad substrate specificity, and thus, there might be a metabolic grid from a precursor to phomopsin A. The enzyme(s) responsible for the biosynthesis of 3,4-dehydrovaline (dVal) have also not been identified yet. Finally, phomM' acts as an S-adenosylmethionine-dependent alpha-N-methyltransferase that catalyzes two successive N-methylation reactions, converting N-desmethyl-phomopsin A to phomopsin A and phomopsin A further to an N,N-dimethylated congener called phomopsin E. The polypeptide is UstYa family oxidase phomYd' (Diaporthe leptostromiformis (Lupinosis disease fungus)).